The chain runs to 214 residues: MAKNKLNKNWLHDHINDPYVKLAQKEGYRARAVYKLKEIDETEKLIKPGQIIVDLGATPGSWSQYVRNKLSGSVGGGINGTIIGLDMLPMEPIADVHFIQGDFREQEVLEQLEQVLQGRKVDLVISDMAPNLSGIAVADAARMIDLIDLAIDFTQHHMKPSGSLLVKCFNGSGYSYIVEKFRDEFKTVVQKKPKASRDKSSEIFLLGKTLKNPL.

Gly60, Trp62, Asp86, Asp102, and Asp127 together coordinate S-adenosyl-L-methionine. The active-site Proton acceptor is Lys167.

The protein belongs to the class I-like SAM-binding methyltransferase superfamily. RNA methyltransferase RlmE family.

It localises to the cytoplasm. It catalyses the reaction uridine(2552) in 23S rRNA + S-adenosyl-L-methionine = 2'-O-methyluridine(2552) in 23S rRNA + S-adenosyl-L-homocysteine + H(+). Functionally, specifically methylates the uridine in position 2552 of 23S rRNA at the 2'-O position of the ribose in the fully assembled 50S ribosomal subunit. The protein is Ribosomal RNA large subunit methyltransferase E of Janthinobacterium sp. (strain Marseille) (Minibacterium massiliensis).